Reading from the N-terminus, the 836-residue chain is Transcription factor vrtR2 (836 aa).

Polar residues predominate over residues 1 to 26 (MPSLSSKTSTMQRSCRPQMSACPNQQ). The segment at 1–29 (MPSLSSKTSTMQRSCRPQMSACPNQQQKD) is disordered. Residues 37-63 (CVLCRDRKLKCDKLDPCSNCTSSGVAC) constitute a DNA-binding region (zn(2)-C6 fungal-type). The segment at 72-114 (PRGRHARTVQTKASTPPDTRRRGSSNESTTAPAPDDGGLGTHI) is disordered. Residues 79 to 88 (TVQTKASTPP) are compositionally biased toward polar residues.

The protein resides in the nucleus. Functionally, probable transcription factor that regulates expression of the gene cluster that mediates the biosynthesis of viridicatumtoxin, a tetracycline-like fungal meroterpenoid with a unique, fused spirobicyclic ring system. The chain is Transcription factor vrtR2 from Penicillium aethiopicum.